Reading from the N-terminus, the 350-residue chain is Protein-glutamate methylesterase/protein-glutamine glutaminase 1 (350 aa).

Residues 1 to 116 (MVVDDSAVVR…KGFLHDSAKV (116 aa)) form the Response regulatory domain. Position 50 is a 4-aspartylphosphate (D50). The region spanning 160-350 (LKTTEQLVAI…IPQAILDCSH (191 aa)) is the CheB-type methylesterase domain. Active-site residues include S172, H198, and D294.

This sequence belongs to the CheB family. Phosphorylated by CheA. Phosphorylation of the N-terminal regulatory domain activates the methylesterase activity.

It localises to the cytoplasm. It catalyses the reaction [protein]-L-glutamate 5-O-methyl ester + H2O = L-glutamyl-[protein] + methanol + H(+). The enzyme catalyses L-glutaminyl-[protein] + H2O = L-glutamyl-[protein] + NH4(+). Involved in chemotaxis. Part of a chemotaxis signal transduction system that modulates chemotaxis in response to various stimuli. Catalyzes the demethylation of specific methylglutamate residues introduced into the chemoreceptors (methyl-accepting chemotaxis proteins or MCP) by CheR. Also mediates the irreversible deamidation of specific glutamine residues to glutamic acid. In Photobacterium profundum (strain SS9), this protein is Protein-glutamate methylesterase/protein-glutamine glutaminase 1.